The sequence spans 831 residues: Vi polysaccharide biosynthesis protein TviD (831 aa).

Its pathway is glycan metabolism; Vi-antigen biosynthesis. It participates in capsule biogenesis; capsule polysaccharide biosynthesis. May be required for maturation of the Vi polysaccharide. This Salmonella typhi protein is Vi polysaccharide biosynthesis protein TviD (tviD).